Reading from the N-terminus, the 141-residue chain is Large ribosomal subunit protein uL11 (141 aa).

This sequence belongs to the universal ribosomal protein uL11 family. In terms of assembly, part of the ribosomal stalk of the 50S ribosomal subunit. Interacts with L10 and the large rRNA to form the base of the stalk. L10 forms an elongated spine to which L12 dimers bind in a sequential fashion forming a multimeric L10(L12)X complex. One or more lysine residues are methylated.

In terms of biological role, forms part of the ribosomal stalk which helps the ribosome interact with GTP-bound translation factors. This chain is Large ribosomal subunit protein uL11, found in Prochlorococcus marinus (strain NATL1A).